A 139-amino-acid polypeptide reads, in one-letter code: Nucleoside diphosphate kinase (139 aa).

The ATP site is built by K10, F58, R86, T92, R103, and N113. The active-site Pros-phosphohistidine intermediate is H116.

The protein belongs to the NDK family. Homotetramer. Requires Mg(2+) as cofactor.

The protein localises to the cytoplasm. The enzyme catalyses a 2'-deoxyribonucleoside 5'-diphosphate + ATP = a 2'-deoxyribonucleoside 5'-triphosphate + ADP. The catalysed reaction is a ribonucleoside 5'-diphosphate + ATP = a ribonucleoside 5'-triphosphate + ADP. In terms of biological role, major role in the synthesis of nucleoside triphosphates other than ATP. The ATP gamma phosphate is transferred to the NDP beta phosphate via a ping-pong mechanism, using a phosphorylated active-site intermediate. This chain is Nucleoside diphosphate kinase, found in Desulfovibrio desulfuricans (strain ATCC 27774 / DSM 6949 / MB).